Reading from the N-terminus, the 367-residue chain is Teichoic acid glycerol-phosphate primase (367 aa).

Belongs to the CDP-glycerol glycerophosphotransferase family.

The protein localises to the cell membrane. It carries out the reaction N-acetyl-beta-D-mannosaminyl-(1-&gt;4)-N-acetyl-alpha-D-glucosaminyl di-trans,octa-cis-undecaprenyl diphosphate + CDP-glycerol = 4-O-[(2R)-glycerylphospho]-N-acetyl-beta-D-mannosaminyl-(1-&gt;4)-N-acetyl-alpha-D-glucosaminyl di-trans,octa-cis-undecaprenyl diphosphate + CMP + H(+). The protein operates within cell wall biogenesis; poly(ribitol phosphate) teichoic acid biosynthesis. Functionally, catalyzes the addition of a single glycerol phosphate residue to the prenoldiphosphate-linked disaccharide. This Staphylococcus aureus (strain NCTC 8325 / PS 47) protein is Teichoic acid glycerol-phosphate primase (tarB).